The following is a 296-amino-acid chain: Bifunctional protein FolD 1 (296 aa).

NADP(+)-binding positions include 167–169 and I235; that span reads GCG.

This sequence belongs to the tetrahydrofolate dehydrogenase/cyclohydrolase family. As to quaternary structure, homodimer.

The enzyme catalyses (6R)-5,10-methylene-5,6,7,8-tetrahydrofolate + NADP(+) = (6R)-5,10-methenyltetrahydrofolate + NADPH. The catalysed reaction is (6R)-5,10-methenyltetrahydrofolate + H2O = (6R)-10-formyltetrahydrofolate + H(+). It functions in the pathway one-carbon metabolism; tetrahydrofolate interconversion. Its function is as follows. Catalyzes the oxidation of 5,10-methylenetetrahydrofolate to 5,10-methenyltetrahydrofolate and then the hydrolysis of 5,10-methenyltetrahydrofolate to 10-formyltetrahydrofolate. This is Bifunctional protein FolD 1 from Nocardioides sp. (strain ATCC BAA-499 / JS614).